The chain runs to 132 residues: Small ribosomal subunit protein uS8 (132 aa).

This sequence belongs to the universal ribosomal protein uS8 family. Part of the 30S ribosomal subunit. Contacts proteins S5 and S12.

Its function is as follows. One of the primary rRNA binding proteins, it binds directly to 16S rRNA central domain where it helps coordinate assembly of the platform of the 30S subunit. This Stenotrophomonas maltophilia (strain R551-3) protein is Small ribosomal subunit protein uS8.